The following is a 398-amino-acid chain: Organelle RRM domain-containing protein 1, chloroplastic (398 aa).

A chloroplast-targeting transit peptide spans 1–88 (MDTALPSVLI…RWVVVMDTPP (88 aa)). Residues 54 to 70 (LLASSSESPPAQLAAAS) show a composition bias toward low complexity. Positions 54–79 (LLASSSESPPAQLAAASTESQSRSSR) are disordered. An RRM domain is found at 299–377 (KRLFVTGLSF…WMIVVDVAKT (79 aa)).

The protein localises to the plastid. It is found in the chloroplast. In terms of biological role, involved in C-to-U editing of chloroplastic RNA. Functions as major chloroplastic editing factor. Controls a majority of the chloroplastic editing sites. The polypeptide is Organelle RRM domain-containing protein 1, chloroplastic (ORRM1) (Zea mays (Maize)).